The sequence spans 428 residues: Septin homolog spn7 (428 aa).

The 276-residue stretch at 15 to 290 folds into the Septin-type G domain; it reads KGKKLRIMVA…ENYRTEKLSN (276 aa). The tract at residues 25-32 is G1 motif; it reads GSSYTSYQ. GTP-binding positions include 25–32, Gly86, 166–174, and Gly224; these read GSSYTSYQ and NSNAFTEEE. Residues 83–86 form a G3 motif region; it reads EVNG. Residues 165 to 168 form a G4 motif region; sequence GNSN. 2 disordered regions span residues 287–345 and 387–414; these read KLSN…SEEL and KEFP…KKMD. Residues 290 to 307 show a composition bias toward polar residues; sequence NDSPSNTSLSLQKQNSIV. Positions 309 to 325 are enriched in basic and acidic residues; the sequence is NEDKRSVNGSERTETRS. Composition is skewed to polar residues over residues 326–339 and 392–405; these read SIDQ…VSDS and RTTS…NNTT.

It belongs to the TRAFAC class TrmE-Era-EngA-EngB-Septin-like GTPase superfamily. Septin GTPase family. As to quaternary structure, component of the sporulation-specific septin complex composed of at least spn2, spn5, spn6 and spn7.

Its subcellular location is the cytoplasm. It localises to the nucleus. It is found in the forespore membrane. Septin-like protein involved in the correct orientation of forespore membrane extension during sporulation. Binds phosphatidylinositol 4-phosphate. The polypeptide is Septin homolog spn7 (spn7) (Schizosaccharomyces pombe (strain 972 / ATCC 24843) (Fission yeast)).